Reading from the N-terminus, the 444-residue chain is Phosphoglucosamine mutase (444 aa).

The Phosphoserine intermediate role is filled by Ser-102. Mg(2+) is bound by residues Ser-102, Asp-241, Asp-243, and Asp-245. Ser-102 carries the post-translational modification Phosphoserine.

The protein belongs to the phosphohexose mutase family. Requires Mg(2+) as cofactor. Post-translationally, activated by phosphorylation.

The catalysed reaction is alpha-D-glucosamine 1-phosphate = D-glucosamine 6-phosphate. Catalyzes the conversion of glucosamine-6-phosphate to glucosamine-1-phosphate. The chain is Phosphoglucosamine mutase from Histophilus somni (strain 2336) (Haemophilus somnus).